A 198-amino-acid polypeptide reads, in one-letter code: Proteasome subunit beta 1 (198 aa).

Positions 1–6 (MSGPGA) are cleaved as a propeptide — removed in mature form; by autocatalysis. Thr-7 serves as the catalytic Nucleophile.

It belongs to the peptidase T1B family. As to quaternary structure, the 20S proteasome core is composed of 14 alpha and 14 beta subunits that assemble into four stacked heptameric rings, resulting in a barrel-shaped structure. The two inner rings, each composed of seven catalytic beta subunits, are sandwiched by two outer rings, each composed of seven alpha subunits. The catalytic chamber with the active sites is on the inside of the barrel. Has a gated structure, the ends of the cylinder being occluded by the N-termini of the alpha-subunits. Is capped at one or both ends by the proteasome regulatory ATPase, PAN.

It localises to the cytoplasm. It catalyses the reaction Cleavage of peptide bonds with very broad specificity.. Its activity is regulated as follows. The formation of the proteasomal ATPase PAN-20S proteasome complex, via the docking of the C-termini of PAN into the intersubunit pockets in the alpha-rings, triggers opening of the gate for substrate entry. Interconversion between the open-gate and close-gate conformations leads to a dynamic regulation of the 20S proteasome proteolysis activity. In terms of biological role, component of the proteasome core, a large protease complex with broad specificity involved in protein degradation. In Ignicoccus hospitalis (strain KIN4/I / DSM 18386 / JCM 14125), this protein is Proteasome subunit beta 1.